Reading from the N-terminus, the 405-residue chain is Splicing factor 45 (405 aa).

S2 carries the post-translational modification N-acetylserine. S2 carries the post-translational modification Phosphoserine. Residue K15 forms a Glycyl lysine isopeptide (Lys-Gly) (interchain with G-Cter in SUMO2) linkage. N6-acetyllysine is present on K21. Glycyl lysine isopeptide (Lys-Gly) (interchain with G-Cter in SUMO2) cross-links involve residues K24 and K33. At K41 the chain carries N6-acetyllysine; alternate. Residue K41 forms a Glycyl lysine isopeptide (Lys-Gly) (interchain with G-Cter in SUMO2); alternate linkage. Residues 57–68 show a composition bias toward basic and acidic residues; the sequence is LKRGGSSDDRQI. Disordered stretches follow at residues 57 to 88 and 114 to 233; these read LKRG…SGFS and RQRE…FLAN. K58 participates in a covalent cross-link: Glycyl lysine isopeptide (Lys-Gly) (interchain with G-Cter in SUMO2). T71 is modified (phosphothreonine). Over residues 114–153 the composition is skewed to basic and acidic residues; it reads RQREERQRQRELERQKEIEEREKRRKDRHEASGFSRRPDP. Residues S155 and S169 each carry the phosphoserine modification. Basic and acidic residues predominate over residues 182 to 200; it reads VEKDKELPRDFPYEEDSRP. The residue at position 222 (S222) is a Phosphoserine. The G-patch domain occupies 235–283; the sequence is GGTVAHKIMQKYGFREGQGLGKHEQGLSTALSVEKTSKRGGKIIVGDAT. T237 carries the phosphothreonine modification. K256 is covalently cross-linked (Glycyl lysine isopeptide (Lys-Gly) (interchain with G-Cter in SUMO2)). S266 carries the post-translational modification Phosphoserine. A Glycyl lysine isopeptide (Lys-Gly) (interchain with G-Cter in SUMO2) cross-link involves residue K276. Residues S295 and S297 each carry the phosphoserine modification. An RRM domain is found at 310–389; that stretch reads VVLLRNMVGA…YFGGRVVKAC (80 aa).

In terms of assembly, binds SXL. Associates with the spliceosome. Interacts with SF3B1, SF1 and U2AF2.

Its subcellular location is the nucleus. Splice factor that binds to the single-stranded 3'AG at the exon/intron border and promotes its utilization in the second catalytic step. Involved in the regulation of alternative splicing and the utilization of cryptic splice sites. The polypeptide is Splicing factor 45 (Rbm17) (Mus musculus (Mouse)).